Consider the following 439-residue polypeptide: 23S rRNA (uracil(1939)-C(5))-methyltransferase RlmD (439 aa).

A TRAM domain is found at 10 to 68 (KSTQPQRIEFTVDSLDHHCVGIGRHQGKAIFIEGALPGEQVKARILDDKKQYAHAALQQ). [4Fe-4S] cluster-binding residues include Cys-81, Cys-87, Cys-90, and Cys-169. Positions 273, 302, 307, 323, 350, and 371 each coordinate S-adenosyl-L-methionine. The Nucleophile role is filled by Cys-397.

This sequence belongs to the class I-like SAM-binding methyltransferase superfamily. RNA M5U methyltransferase family. RlmD subfamily.

It carries out the reaction uridine(1939) in 23S rRNA + S-adenosyl-L-methionine = 5-methyluridine(1939) in 23S rRNA + S-adenosyl-L-homocysteine + H(+). In terms of biological role, catalyzes the formation of 5-methyl-uridine at position 1939 (m5U1939) in 23S rRNA. The sequence is that of 23S rRNA (uracil(1939)-C(5))-methyltransferase RlmD from Aeromonas salmonicida (strain A449).